The sequence spans 262 residues: Hydroxyethylthiazole kinase (262 aa).

Methionine 50 is a binding site for substrate. Residues arginine 125 and threonine 171 each contribute to the ATP site. Glycine 198 contributes to the substrate binding site.

This sequence belongs to the Thz kinase family. It depends on Mg(2+) as a cofactor.

The enzyme catalyses 5-(2-hydroxyethyl)-4-methylthiazole + ATP = 4-methyl-5-(2-phosphooxyethyl)-thiazole + ADP + H(+). It functions in the pathway cofactor biosynthesis; thiamine diphosphate biosynthesis; 4-methyl-5-(2-phosphoethyl)-thiazole from 5-(2-hydroxyethyl)-4-methylthiazole: step 1/1. Its function is as follows. Catalyzes the phosphorylation of the hydroxyl group of 4-methyl-5-beta-hydroxyethylthiazole (THZ). This is Hydroxyethylthiazole kinase from Escherichia coli O139:H28 (strain E24377A / ETEC).